The sequence spans 304 residues: Granaticin polyketide synthase bifunctional cyclase/dehydratase (304 aa).

It participates in antifungal biosynthesis; monensin biosynthesis. Is needed for correct cyclization of the oligoketide leading to isochromanequinone formation. The polypeptide is Granaticin polyketide synthase bifunctional cyclase/dehydratase (Streptomyces virginiae (Streptomyces cinnamonensis)).